Consider the following 442-residue polypeptide: MQSSASRCGRALVALLLACGLLGVWGEKRGFPPAQATPSLLGTKEVMTPPTKTSWTRGSNSSLMRSSAPAEVTKGGRVAGVPPRSFPPPCQRKIEINKTFKYINTIVSCLVFVLGIIGNSTLLRIIYKNKCMRNGPNILIASLALGDLLHIIIDIPINAYKLLAGDWPFGAEMCKLVPFIQKASVGITVLSLCALSIDRYRAVASWSRIKGIGVPKWTAVEIVLIWVVSVVLAVPEAIGFDVITSDYKGKPLRVCMLNPFQKTAFMQFYKTAKDWWLFSFYFCLPLAITAIFYTLMTCEMLRKKSGMQIALNDHLKQRREVAKTVFCLVLVFALCWLPLHLSRILKLTLYDQSNPQRCELLSFLLVLDYIGINMASLNSCINPIALYLVSKRFKNCFKSCLCCWCQTFEEKQSLEEKQSCLKFKANDHGYDNFRSSNKYSSS.

The N-terminal stretch at methionine 1–glycine 26 is a signal peptide. The Extracellular segment spans residues glutamate 27–lysine 101. N-linked (GlcNAc...) asparagine glycosylation is found at asparagine 60 and asparagine 97. The chain crosses the membrane as a helical span at residues tyrosine 102–isoleucine 126. The Cytoplasmic portion of the chain corresponds to tyrosine 127–asparagine 137. Residues isoleucine 138–leucine 163 traverse the membrane as a helical segment. At alanine 164–lysine 175 the chain is on the extracellular side. A disulfide bond links cysteine 174 and cysteine 255. A helical transmembrane segment spans residues leucine 176–isoleucine 197. Residues aspartate 198–threonine 218 are Cytoplasmic-facing. Residues alanine 219–isoleucine 243 form a helical membrane-spanning segment. At threonine 244–threonine 271 the chain is on the extracellular side. The chain crosses the membrane as a helical span at residues alanine 272–methionine 296. Residues threonine 297 to threonine 324 lie on the Cytoplasmic side of the membrane. Serine 305 carries the post-translational modification Phosphoserine. The chain crosses the membrane as a helical span at residues valine 325–tyrosine 350. The Extracellular segment spans residues aspartate 351–serine 362. A helical membrane pass occupies residues phenylalanine 363–valine 389. At serine 390–serine 442 the chain is on the cytoplasmic side. S-palmitoyl cysteine attachment occurs at residues cysteine 402, cysteine 403, and cysteine 405. Serine 419 carries the post-translational modification Phosphoserine. Tyrosine 439 carries the phosphotyrosine modification. A phosphoserine mark is found at serine 440, serine 441, and serine 442.

This sequence belongs to the G-protein coupled receptor 1 family. Endothelin receptor subfamily. EDNRB sub-subfamily. In terms of tissue distribution, widely distributed in cell types of a variety of tissues.

The protein localises to the cell membrane. Functionally, non-specific receptor for endothelin 1, 2, and 3. Mediates its action by association with G proteins that activate a phosphatidylinositol-calcium second messenger system. The sequence is that of Endothelin receptor type B from Rattus norvegicus (Rat).